The primary structure comprises 402 residues: S-adenosylmethionine synthase (402 aa).

H17 contributes to the ATP binding site. D19 contributes to the Mg(2+) binding site. K(+) is bound at residue E45. The L-methionine site is built by E58 and Q101. The segment at 101 to 111 is flexible loop; the sequence is QSSDIADGVNE. Residues 177-179, 244-245, D253, 259-260, A276, and K280 each bind ATP; these read DAK, RF, and RK. D253 is a binding site for L-methionine. Residue K284 participates in L-methionine binding.

The protein belongs to the AdoMet synthase family. Homotetramer; dimer of dimers. Mg(2+) is required as a cofactor. The cofactor is K(+).

Its subcellular location is the cytoplasm. The catalysed reaction is L-methionine + ATP + H2O = S-adenosyl-L-methionine + phosphate + diphosphate. The protein operates within amino-acid biosynthesis; S-adenosyl-L-methionine biosynthesis; S-adenosyl-L-methionine from L-methionine: step 1/1. Its function is as follows. Catalyzes the formation of S-adenosylmethionine (AdoMet) from methionine and ATP. The overall synthetic reaction is composed of two sequential steps, AdoMet formation and the subsequent tripolyphosphate hydrolysis which occurs prior to release of AdoMet from the enzyme. The chain is S-adenosylmethionine synthase from Lactobacillus johnsonii (strain CNCM I-12250 / La1 / NCC 533).